The sequence spans 78 residues: Small ribosomal subunit protein bS18 (78 aa).

This sequence belongs to the bacterial ribosomal protein bS18 family. In terms of assembly, part of the 30S ribosomal subunit. Forms a tight heterodimer with protein bS6.

Binds as a heterodimer with protein bS6 to the central domain of the 16S rRNA, where it helps stabilize the platform of the 30S subunit. The sequence is that of Small ribosomal subunit protein bS18 from Lacticaseibacillus casei (strain BL23) (Lactobacillus casei).